The primary structure comprises 315 residues: Deoxyhypusine hydroxylase (315 aa).

HEAT-like PBS-type repeat units lie at residues 23–52 (IAKR…LNDK), 56–82 (LRHE…LVKN), 89–115 (VRHE…YSND), 179–205 (NRYR…GLKD), 211–237 (LRHE…CVLD), and 244–270 (VRHE…LLQD). The Fe cation site is built by His58, His91, and Glu92. Positions 213, 246, and 247 each coordinate Fe cation.

The protein belongs to the deoxyhypusine hydroxylase family. It depends on Fe(2+) as a cofactor.

The catalysed reaction is [eIF5A protein]-deoxyhypusine + AH2 + O2 = [eIF5A protein]-hypusine + A + H2O. The protein operates within protein modification; eIF5A hypusination. Functionally, catalyzes the hydroxylation of the N(6)-(4-aminobutyl)-L-lysine intermediate produced by deoxyhypusine synthase/DHPS on a critical lysine of the eukaryotic translation initiation factor 5A/eIF-5A. This is the second step of the post-translational modification of that lysine into an unusual amino acid residue named hypusine. Hypusination is unique to mature eIF-5A factor and is essential for its function. The protein is Deoxyhypusine hydroxylase (dohh-1) of Dictyostelium discoideum (Social amoeba).